Here is a 422-residue protein sequence, read N- to C-terminus: Histidinol dehydrogenase (422 aa).

NAD(+)-binding residues include tyrosine 123, glutamine 183, and asparagine 206. The substrate site is built by serine 229, glutamine 251, and histidine 254. Positions 251 and 254 each coordinate Zn(2+). Active-site proton acceptor residues include glutamate 320 and histidine 321. Substrate contacts are provided by histidine 321, aspartate 354, glutamate 408, and histidine 413. Aspartate 354 is a binding site for Zn(2+). Histidine 413 contacts Zn(2+).

It belongs to the histidinol dehydrogenase family. Requires Zn(2+) as cofactor.

It catalyses the reaction L-histidinol + 2 NAD(+) + H2O = L-histidine + 2 NADH + 3 H(+). Its pathway is amino-acid biosynthesis; L-histidine biosynthesis; L-histidine from 5-phospho-alpha-D-ribose 1-diphosphate: step 9/9. Its function is as follows. Catalyzes the sequential NAD-dependent oxidations of L-histidinol to L-histidinaldehyde and then to L-histidine. The protein is Histidinol dehydrogenase of Natronomonas pharaonis (strain ATCC 35678 / DSM 2160 / CIP 103997 / JCM 8858 / NBRC 14720 / NCIMB 2260 / Gabara) (Halobacterium pharaonis).